The chain runs to 537 residues: Glucose-6-phosphate isomerase (537 aa).

The active-site Proton donor is the E355. Residues H386 and K501 contribute to the active site.

This sequence belongs to the GPI family.

It localises to the cytoplasm. It catalyses the reaction alpha-D-glucose 6-phosphate = beta-D-fructose 6-phosphate. It functions in the pathway carbohydrate biosynthesis; gluconeogenesis. It participates in carbohydrate degradation; glycolysis; D-glyceraldehyde 3-phosphate and glycerone phosphate from D-glucose: step 2/4. Functionally, catalyzes the reversible isomerization of glucose-6-phosphate to fructose-6-phosphate. This chain is Glucose-6-phosphate isomerase, found in Protochlamydia amoebophila (strain UWE25).